A 239-amino-acid chain; its full sequence is Orotidine 5'-phosphate decarboxylase (239 aa).

Residues Asp-15, Lys-36, 63 to 72 (DLKFHDIPNT), Thr-127, Arg-189, Gln-198, Gly-218, and Arg-219 each bind substrate. Lys-65 functions as the Proton donor in the catalytic mechanism.

Belongs to the OMP decarboxylase family. Type 1 subfamily. In terms of assembly, homodimer.

The catalysed reaction is orotidine 5'-phosphate + H(+) = UMP + CO2. It participates in pyrimidine metabolism; UMP biosynthesis via de novo pathway; UMP from orotate: step 2/2. Catalyzes the decarboxylation of orotidine 5'-monophosphate (OMP) to uridine 5'-monophosphate (UMP). This is Orotidine 5'-phosphate decarboxylase from Prochlorococcus marinus (strain MIT 9515).